We begin with the raw amino-acid sequence, 595 residues long: Arginine--tRNA ligase (595 aa).

Positions 132 to 142 match the 'HIGH' region motif; it reads ANPTGPLHVGH.

The protein belongs to the class-I aminoacyl-tRNA synthetase family. As to quaternary structure, monomer.

The protein localises to the cytoplasm. It carries out the reaction tRNA(Arg) + L-arginine + ATP = L-arginyl-tRNA(Arg) + AMP + diphosphate. The chain is Arginine--tRNA ligase from Cupriavidus necator (strain ATCC 17699 / DSM 428 / KCTC 22496 / NCIMB 10442 / H16 / Stanier 337) (Ralstonia eutropha).